The primary structure comprises 102 residues: Small ribosomal subunit protein uS10 (102 aa).

Belongs to the universal ribosomal protein uS10 family. As to quaternary structure, part of the 30S ribosomal subunit.

Involved in the binding of tRNA to the ribosomes. The sequence is that of Small ribosomal subunit protein uS10 from Methanocorpusculum labreanum (strain ATCC 43576 / DSM 4855 / Z).